Consider the following 84-residue polypeptide: Cell division topological specificity factor (84 aa).

Belongs to the MinE family.

Functionally, prevents the cell division inhibition by proteins MinC and MinD at internal division sites while permitting inhibition at polar sites. This ensures cell division at the proper site by restricting the formation of a division septum at the midpoint of the long axis of the cell. This is Cell division topological specificity factor from Pseudomonas putida (strain ATCC 700007 / DSM 6899 / JCM 31910 / BCRC 17059 / LMG 24140 / F1).